The chain runs to 339 residues: Aspartate carbamoyltransferase catalytic subunit (339 aa).

Carbamoyl phosphate is bound by residues Arg60 and Thr61. Lys88 is an L-aspartate binding site. Residues Arg110, His143, and Gln146 each coordinate carbamoyl phosphate. L-aspartate is bound by residues Arg183 and Arg254. Carbamoyl phosphate is bound by residues Gly295 and Pro296.

Belongs to the aspartate/ornithine carbamoyltransferase superfamily. ATCase family. Heterododecamer (2C3:3R2) of six catalytic PyrB chains organized as two trimers (C3), and six regulatory PyrI chains organized as three dimers (R2).

It catalyses the reaction carbamoyl phosphate + L-aspartate = N-carbamoyl-L-aspartate + phosphate + H(+). It functions in the pathway pyrimidine metabolism; UMP biosynthesis via de novo pathway; (S)-dihydroorotate from bicarbonate: step 2/3. Functionally, catalyzes the condensation of carbamoyl phosphate and aspartate to form carbamoyl aspartate and inorganic phosphate, the committed step in the de novo pyrimidine nucleotide biosynthesis pathway. The protein is Aspartate carbamoyltransferase catalytic subunit of Prochlorococcus marinus (strain MIT 9312).